Reading from the N-terminus, the 207-residue chain is Carbonic anhydrase 2 (207 aa).

4 residues coordinate Zn(2+): Cys51, Asp53, His104, and Cys107.

Belongs to the beta-class carbonic anhydrase family. The cofactor is Zn(2+).

It catalyses the reaction hydrogencarbonate + H(+) = CO2 + H2O. In terms of biological role, catalyzes the reversible hydration of carbon dioxide to form bicarbonate. The chain is Carbonic anhydrase 2 (mtcA2) from Mycobacterium tuberculosis (strain CDC 1551 / Oshkosh).